Consider the following 131-residue polypeptide: Ribonuclease P protein component (131 aa).

The protein belongs to the RnpA family. In terms of assembly, consists of a catalytic RNA component (M1 or rnpB) and a protein subunit.

It carries out the reaction Endonucleolytic cleavage of RNA, removing 5'-extranucleotides from tRNA precursor.. RNaseP catalyzes the removal of the 5'-leader sequence from pre-tRNA to produce the mature 5'-terminus. It can also cleave other RNA substrates such as 4.5S RNA. The protein component plays an auxiliary but essential role in vivo by binding to the 5'-leader sequence and broadening the substrate specificity of the ribozyme. The sequence is that of Ribonuclease P protein component from Acinetobacter baylyi (strain ATCC 33305 / BD413 / ADP1).